A 611-amino-acid polypeptide reads, in one-letter code: MFS siderochrome iron transporter C (611 aa).

The tract at residues 1–25 (MPFLDHRTGPSYGTIDQMEQHSDDE) is disordered. An N-linked (GlcNAc...) asparagine glycan is attached at Asn62. 14 helical membrane passes run 71–91 (VIAYVSIFLMSFCTSLEGQTV), 107–127 (LISTVLVVQNVVNAVIKPPMA), 136–156 (FEAFCVSILIYVLGYIQMAAS), 165–185 (AQIFYSAGSTGLQILQQVFIA), 194–214 (AFLALLPEFPFLVTVWIGPTI), 228–248 (YGMWSIILPASFLPLALSLLL), 282–302 (MGGLILLSAAVTLILVPLTLA), 313–333 (SIVAMIVVGLFCLIALPFWES), 353–373 (ALAGCTLAFWYFMAFYFSVQP), 393–413 (VTQTFAFTSTIAAFAVSILIK), 418–438 (YRAFVIAGCVVYIIGMVLMMV), 449–469 (ILVTQVVVGIGGGLLNVPVQL), 486–506 (MFLTSMEMGGAVGAALSGAVW), and 560–580 (LLILALIAIIPLVPLSLAMED). The disordered stretch occupies residues 592-611 (VDPVPAEEGEIEPNRHVKRT).

The protein belongs to the major facilitator superfamily.

The protein localises to the membrane. In terms of biological role, major facilitator transporter that contributes to the maintenance of intracellular siderophore ferricrocin (FC) levels. Plays a role in conidiation and confers protection against oxidative stress. Also contributes to fungal virulence in the Galleria mellonella animal model system. Does not appear to play a role in either siderophore export or uptake. This chain is MFS siderochrome iron transporter C, found in Aspergillus fumigatus (strain ATCC MYA-4609 / CBS 101355 / FGSC A1100 / Af293) (Neosartorya fumigata).